Here is a 157-residue protein sequence, read N- to C-terminus: Ubiquitin-like protein 4A (157 aa).

One can recognise a Ubiquitin-like domain in the interval 1–76 (MQLTVKALQG…LNLVVKPLEK (76 aa)). A Glycyl lysine isopeptide (Lys-Gly) (interchain with G-Cter in ubiquitin) cross-link involves residue lysine 48. The residue at position 90 (serine 90) is a Phosphoserine. The required and sufficient for interaction with BAG6 stretch occupies residues 96 to 138 (WQLISKVLARHFSAADASRVLEQLQRDYERSLSRLTLDDIERL).

Component of the BAG6/BAT3 complex, at least composed of BAG6, UBL4A and GET4/TRC35. Interacts with BAG6; the interaction is direct and required for UBL4A protein stability. Interacts with USP13; may be indirect via BAG6. Post-translationally, polyubiquitinated. Ubiquitination by AMFR and deubiquitination by USP13 may regulate the interaction between the BAG6/BAT3 complex and SGTA and therefore may regulate client proteins fate.

Its subcellular location is the cytoplasm. The protein localises to the cytosol. The protein resides in the nucleus. As part of a cytosolic protein quality control complex, the BAG6/BAT3 complex, maintains misfolded and hydrophobic patches-containing proteins in a soluble state and participates in their proper delivery to the endoplasmic reticulum or alternatively can promote their sorting to the proteasome where they undergo degradation. The BAG6/BAT3 complex is involved in the post-translational delivery of tail-anchored/type II transmembrane proteins to the endoplasmic reticulum membrane. Recruited to ribosomes, it interacts with the transmembrane region of newly synthesized tail-anchored proteins and together with SGTA and ASNA1 mediates their delivery to the endoplasmic reticulum. Client proteins that cannot be properly delivered to the endoplasmic reticulum are ubiquitinated and sorted to the proteasome. Similarly, the BAG6/BAT3 complex also functions as a sorting platform for proteins of the secretory pathway that are mislocalized to the cytosol either delivering them to the proteasome for degradation or to the endoplasmic reticulum. The BAG6/BAT3 complex also plays a role in the endoplasmic reticulum-associated degradation (ERAD), a quality control mechanism that eliminates unwanted proteins of the endoplasmic reticulum through their retrotranslocation to the cytosol and their targeting to the proteasome. It maintains these retrotranslocated proteins in an unfolded yet soluble state condition in the cytosol to ensure their proper delivery to the proteasome. The sequence is that of Ubiquitin-like protein 4A from Homo sapiens (Human).